Consider the following 365-residue polypeptide: Beta-parvin (365 aa).

Positions 1 to 12 are enriched in pro residues; sequence MSSAPPRSPTPR. The tract at residues 1–52 is disordered; it reads MSSAPPRSPTPRAPKMKKDESFLGKLGGTLARKKKTREVTDLQEEGKSAINS. A Phosphoserine modification is found at serine 8. A compositionally biased stretch (basic and acidic residues) spans 37–47; sequence REVTDLQEEGK. Calponin-homology (CH) domains are found at residues 88 to 195 and 255 to 362; these read KELV…MHFR and NLVK…TKYK.

Belongs to the parvin family. Interacts with ILK, ARHGEF6, PXN (via LD motifs), ACTN2 and actin. Interacts with DYSF. Phosphorylated by ILK. As to expression, expressed predominantly in heart and moderately in spleen, lung and skeletal muscle.

Its subcellular location is the cell junction. It localises to the focal adhesion. The protein resides in the cell membrane. The protein localises to the cytoplasm. It is found in the cytoskeleton. Its subcellular location is the cell projection. It localises to the lamellipodium. The protein resides in the myofibril. The protein localises to the sarcomere. It is found in the z line. In terms of biological role, adapter protein that plays a role in integrin signaling via ILK and in activation of the GTPases CDC42 and RAC1 by guanine exchange factors, such as ARHGEF6. Is involved in the reorganization of the actin cytoskeleton and formation of lamellipodia. Plays a role in cell adhesion, cell spreading, establishment or maintenance of cell polarity, and cell migration. This chain is Beta-parvin (Parvb), found in Mus musculus (Mouse).